The sequence spans 99 residues: Large ribosomal subunit protein bL28 (99 aa).

The protein belongs to the bacterial ribosomal protein bL28 family.

The protein is Large ribosomal subunit protein bL28 of Rhizobium leguminosarum bv. trifolii (strain WSM2304).